A 284-amino-acid chain; its full sequence is MTAKLIDGKAIAASLRQQIAKRVAERSQQGLRTPGLAVILVGSDPASQVYVSHKRKDCEEVGFISQAYDLPAETTQVALTNLIDRLNEDAAVDGILLQLPLPAHLDASLLLERIRPDKDVDGFHPYNVGRLAQRIPLLRPCTPKGIIALLESTGVDLYGLDAVVVGASNIVGRPMAMELLLAGCTVTVTHRFTKDLAGHVSRADLVVVAAGKPGLVKGEWIKPGAIVIDVGINRQDDGKLVGDVVYETALPRAGWITPVPGGVGPMTRACLLENTLYAAETLHD.

Residues 166–168 (GAS) and isoleucine 232 contribute to the NADP(+) site.

The protein belongs to the tetrahydrofolate dehydrogenase/cyclohydrolase family. Homodimer.

It catalyses the reaction (6R)-5,10-methylene-5,6,7,8-tetrahydrofolate + NADP(+) = (6R)-5,10-methenyltetrahydrofolate + NADPH. The enzyme catalyses (6R)-5,10-methenyltetrahydrofolate + H2O = (6R)-10-formyltetrahydrofolate + H(+). The protein operates within one-carbon metabolism; tetrahydrofolate interconversion. In terms of biological role, catalyzes the oxidation of 5,10-methylenetetrahydrofolate to 5,10-methenyltetrahydrofolate and then the hydrolysis of 5,10-methenyltetrahydrofolate to 10-formyltetrahydrofolate. The polypeptide is Bifunctional protein FolD 1 (Pseudomonas syringae pv. tomato (strain ATCC BAA-871 / DC3000)).